The primary structure comprises 56 residues: Ovomucoid (56 aa).

Positions 6–56 (VDCSDHPKPACLQEQKPLCGSDNKTYDNKCSFCNAVVDSNGTLTLSHFGKC) constitute a Kazal-like domain. Intrachain disulfides connect cysteine 8/cysteine 38, cysteine 16/cysteine 35, and cysteine 24/cysteine 56. N-linked (GlcNAc...) asparagine glycosylation is present at asparagine 45.

The protein localises to the secreted. This is Ovomucoid from Penelope jacquacu (Spix's guan).